The following is a 1226-amino-acid chain: Cytosolic carboxypeptidase 1 (1226 aa).

The interval 599–619 is disordered; sequence TEDDEDTESNSSVEQASVEVP. The region spanning 848–1138 is the Peptidase M14 domain; that stretch reads YPYTYSTLQM…KFCVGLLRLK (291 aa). The Zn(2+) site is built by H920, E923, and H1017. E1102 functions as the Proton donor/acceptor in the catalytic mechanism. S1168 carries the post-translational modification Phosphoserine. Residues 1206–1226 are disordered; the sequence is YEPSAQEEVLSDSELSRTYLP.

This sequence belongs to the peptidase M14 family. In terms of assembly, interacts with MYLK. Requires Zn(2+) as cofactor.

The protein resides in the cytoplasm. The protein localises to the cytosol. Its subcellular location is the nucleus. It localises to the mitochondrion. It catalyses the reaction (L-glutamyl)(n+1)-gamma-L-glutamyl-L-glutamyl-[protein] + H2O = (L-glutamyl)(n)-gamma-L-glutamyl-L-glutamyl-[protein] + L-glutamate. The catalysed reaction is C-terminal L-alpha-aminoacyl-L-glutamyl-L-glutamyl-[tubulin] + H2O = C-terminal L-alpha-aminoacyl-L-glutamyl-[tubulin] + L-glutamate. Metallocarboxypeptidase that mediates protein deglutamylation of tubulin and non-tubulin target proteins. Catalyzes the removal of polyglutamate side chains present on the gamma-carboxyl group of glutamate residues within the C-terminal tail of alpha- and beta-tubulin. Specifically cleaves tubulin long-side-chains, while it is not able to remove the branching point glutamate. Also catalyzes the removal of polyglutamate residues from the carboxy-terminus of alpha-tubulin as well as non-tubulin proteins such as MYLK. Involved in KLF4 deglutamylation which promotes KLF4 proteasome-mediated degradation, thereby negatively regulating cell pluripotency maintenance and embryogenesis. The polypeptide is Cytosolic carboxypeptidase 1 (Homo sapiens (Human)).